A 375-amino-acid chain; its full sequence is Ribosomal RNA large subunit methyltransferase F (375 aa).

2 disordered regions span residues 1–39 and 262–281; these read MKNNSHNAKQAPSKAAKPKHDNDVNKAKPKRVKKKAAVK and NQRKKGVKQQNSPVKQGKPT. Basic residues predominate over residues 27-38; sequence AKPKRVKKKAAV.

This sequence belongs to the methyltransferase superfamily. METTL16/RlmF family.

The protein resides in the cytoplasm. The enzyme catalyses adenosine(1618) in 23S rRNA + S-adenosyl-L-methionine = N(6)-methyladenosine(1618) in 23S rRNA + S-adenosyl-L-homocysteine + H(+). In terms of biological role, specifically methylates the adenine in position 1618 of 23S rRNA. This Vibrio parahaemolyticus serotype O3:K6 (strain RIMD 2210633) protein is Ribosomal RNA large subunit methyltransferase F.